The chain runs to 638 residues: MTEKTIRLTTAQALVKFLNQQYIEVDDEMAPFVDGIFTVFGHGNVVGIGQALEEDPGHLNVYQGKNEQGMAHAAIAYAKQKNRKRIYACSASAGPGSANLITAASTALANNLPVLFLPADTFATRQPDPVLQQLEHESSAAITTNDGFQAVSRYFDRVQRPEQLMSALIRAFEVMTNPASAGPATICIAQDTEGEAFDYPVEFFQKRIHYLNRQIPTKRELTEAARLIQASKTPVIIVGGGARYSDAREELIALSEQSNIPLVETHAGKSTVEFDFKNNLGGTGILGTLAANKAIRDADLVIGIGTRYTDFTTSSKTAFGPATKFININVSRMQTYKLDAFQVVGDAKATLAELAPLLKGYQTQFGDRIAVYKAEWLAERTRLQNTKFNREAFTPEIKDQFDQATLNEYADSLQTEFTQTEALITINDTVAPDSIVVCSAGSLPGDLQRLWNPAVPNTYHLEYGYSCMGYEINGALGAKMAAANNQEVYSIVGDGSFCMSHSELLTSLQYGKKINIMLFDNSGFGCINNLQMANGSDSFFCEFRDSDNQIMQVDYAKIAEGYGAKVYRANTKEDLISALEDAKKQTKTTLIDMKVLPKTMSEGYLNWWNVGVSEVSNKESIKQAYEEKQTNLKNARLY.

Residue Glu-67 coordinates thiamine diphosphate. Residues Ser-442–Gly-523 form a thiamine pyrophosphate binding region. Asp-494 and Asn-521 together coordinate Mg(2+).

This sequence belongs to the TPP enzyme family. It depends on Mg(2+) as a cofactor. Thiamine diphosphate is required as a cofactor.

The catalysed reaction is 3D-3,5/4-trihydroxycyclohexane-1,2-dione + H2O = 5-deoxy-D-glucuronate + H(+). Its pathway is polyol metabolism; myo-inositol degradation into acetyl-CoA; acetyl-CoA from myo-inositol: step 3/7. Its function is as follows. Involved in the cleavage of the C1-C2 bond of 3D-(3,5/4)-trihydroxycyclohexane-1,2-dione (THcHDO) to yield 5-deoxy-glucuronate (5DG). This Listeria monocytogenes serovar 1/2a (strain ATCC BAA-679 / EGD-e) protein is 3D-(3,5/4)-trihydroxycyclohexane-1,2-dione hydrolase.